We begin with the raw amino-acid sequence, 279 residues long: Putative pyruvate, phosphate dikinase regulatory protein (279 aa).

Residue 153–160 (GISRTSKT) participates in ADP binding.

This sequence belongs to the pyruvate, phosphate/water dikinase regulatory protein family. PDRP subfamily.

It carries out the reaction N(tele)-phospho-L-histidyl/L-threonyl-[pyruvate, phosphate dikinase] + ADP = N(tele)-phospho-L-histidyl/O-phospho-L-threonyl-[pyruvate, phosphate dikinase] + AMP + H(+). The catalysed reaction is N(tele)-phospho-L-histidyl/O-phospho-L-threonyl-[pyruvate, phosphate dikinase] + phosphate + H(+) = N(tele)-phospho-L-histidyl/L-threonyl-[pyruvate, phosphate dikinase] + diphosphate. Functionally, bifunctional serine/threonine kinase and phosphorylase involved in the regulation of the pyruvate, phosphate dikinase (PPDK) by catalyzing its phosphorylation/dephosphorylation. This chain is Putative pyruvate, phosphate dikinase regulatory protein, found in Brucella abortus (strain 2308).